We begin with the raw amino-acid sequence, 260 residues long: Small ribosomal subunit protein uS2 (260 aa).

It belongs to the universal ribosomal protein uS2 family.

This chain is Small ribosomal subunit protein uS2 (rpsB), found in Borreliella burgdorferi (strain ATCC 35210 / DSM 4680 / CIP 102532 / B31) (Borrelia burgdorferi).